Reading from the N-terminus, the 301-residue chain is MRIAILSRNENLYSTQRLKEAGEARGHEVDIIDTLHCYMDITSSNPTVRYMGKVLPKYDAVIPRIGSSITFYGTAVVRQFEMMGTFCVNESVAISRSRDKLRSLQLLSRKGIGLPRTGFASKPDKIQDLIKNVGGAPLVIKLLEGTQGIGVVLAETNKAAESVIEAFMGLKANILVQEFIKEAGGADIRCFVVGDKVVAAMKRQAAEGEFRSNLHRGGVAQLVRLSKDERATALNAAKAMGLNLCGVDILQSNNGPVVMEVNSSPGLEGIEQATGKDVAGLIYEFIEKKAKPNANRTRGKG.

Positions 104 to 287 (LQLLSRKGIG…VAGLIYEFIE (184 aa)) constitute an ATP-grasp domain. ATP contacts are provided by residues Lys141, 178 to 179 (EF), Asp187, and 211 to 213 (RSN). Residues Asp248, Glu260, and Asn262 each coordinate Mg(2+). Asp248, Glu260, and Asn262 together coordinate Mn(2+).

This sequence belongs to the RimK family. Mg(2+) is required as a cofactor. Requires Mn(2+) as cofactor.

This Shewanella loihica (strain ATCC BAA-1088 / PV-4) protein is Probable alpha-L-glutamate ligase.